Consider the following 429-residue polypeptide: Lysine-specific demethylase JMJ30 (429 aa).

The JmjC domain maps to 272-429; the sequence is SSPMEPTYLA…WSNEAESSSS (158 aa). Residues His-326, Asp-328, and His-405 each coordinate Fe cation.

The protein belongs to the JARID1 histone demethylase family. As to quaternary structure, interacts with EFM. Binds to ATXR2, ARF7 and ARF19. Requires Fe(2+) as cofactor. In terms of tissue distribution, expressed ubiquitously in vasculatures, roots, rosette leaves, stems, inflorescences and siliques. Mainly present in the root meristem and root differentiation area. Observed at high level in callus.

It is found in the nucleus. It localises to the cytoplasm. The protein resides in the endoplasmic reticulum. It carries out the reaction N(6),N(6),N(6)-trimethyl-L-lysyl(36)-[histone H3] + 2 2-oxoglutarate + 2 O2 = N(6)-methyl-L-lysyl(36)-[histone H3] + 2 formaldehyde + 2 succinate + 2 CO2. The catalysed reaction is N(6),N(6),N(6)-trimethyl-L-lysyl(27)-[histone H3] + 2 2-oxoglutarate + 2 O2 = N(6)-methyl-L-lysyl(27)-[histone H3] + 2 formaldehyde + 2 succinate + 2 CO2. The enzyme catalyses N(6),N(6)-dimethyl-L-lysyl(36)-[histone H3] + 2 2-oxoglutarate + 2 O2 = L-lysyl(36)-[histone H3] + 2 formaldehyde + 2 succinate + 2 CO2. Histone demethylase that demethylates 'Lys-36' (H3K36me) of histone H3 with a specific activity for H3K36me3 and H3K36me2. Also active on 'Lys-27' (H3K27me) of histone H3 with a specific activity for H3K27me3 and H3K27me2. No activity on H3K36me1 and H3K27me1. Involved in the control of flowering time by demethylating H3K36me2 at the FT locus and repressing its expression. Acts within the central clock and contributes, in parallel with LUX, to temperature compensation, probably as a component of the evening complex, to maintain circadian period at increasing temperatures; this mechanism involves binding to and regulation of CCA1 and PRR7 promoters. Works in concert with TOC1 to promote the morning-phased clock genes CCA1 and LHY which function as components of the central oscillator. Together with JMJ32, regulates the flowering-repressor FLOWERING LOCUS C (FLC) locus by removing the repressive histone modification H3 lysine 27 trimethylation (H3K27me3), especially at elevated temperatures (e.g. 29 degrees Celsius), thus preventing extreme precocious flowering. JMJ30 and JMJ32 are regulators involved in the integration of abscisic acid (ABA) and brassinosteroids (BR) signaling pathways. Together with JMJ32, controls ABA-mediated growth arrest during the post-germination stage in unfavorable conditions, and responses to ABA during root development, via the removal of repressive histone mark (H3K27me3) from the SnRK2.8 promoter, thus promoting SnRK2.8 expression and subsequent kinase-dependent ABI3 activation. In addition, removes the repressive histone marks (H3K27me3) from the BZR1 locus in response to stress and ABA, thus activating the BR signaling pathway which, in turn, inhibits the ABA signaling pathway. Able to drive tissue identity changes to promote callus formation form somatic cells via a massive genome-wide chromatin remodeling (e.g. H3K9me3 demethylation) leading to the induction of Lateral organ Boundaries-Domain (LBD) genes (e.g. LBD16 and LBD29) that establish root primordia; when in complex with ARF proteins (e.g. ARF7 and ARF19), recruits ATXR2 which promotes the deposition of H3K36me3 at LBD genes promoters, thus ensuring their stable activation during callus formation. The chain is Lysine-specific demethylase JMJ30 from Arabidopsis thaliana (Mouse-ear cress).